The following is a 245-amino-acid chain: Orotidine 5'-phosphate decarboxylase (245 aa).

Substrate is bound by residues Asp22, Lys44, Asp71 to Thr80, Thr131, Arg192, Gln201, Gly221, and Arg222. The active-site Proton donor is Lys73.

The protein belongs to the OMP decarboxylase family. Type 1 subfamily. Homodimer.

It carries out the reaction orotidine 5'-phosphate + H(+) = UMP + CO2. It functions in the pathway pyrimidine metabolism; UMP biosynthesis via de novo pathway; UMP from orotate: step 2/2. In terms of biological role, catalyzes the decarboxylation of orotidine 5'-monophosphate (OMP) to uridine 5'-monophosphate (UMP). The polypeptide is Orotidine 5'-phosphate decarboxylase (Escherichia coli O81 (strain ED1a)).